A 396-amino-acid polypeptide reads, in one-letter code: ATP-dependent RNA helicase eIF4A (396 aa).

Positions Tyr-22–Gln-50 match the Q motif motif. Positions Ile-53–Ile-223 constitute a Helicase ATP-binding domain. Residue Ala-66–Thr-73 participates in ATP binding. A DEAD box motif is present at residues Asp-171–Asp-174. The Helicase C-terminal domain maps to Gly-234–Phe-395.

This sequence belongs to the DEAD box helicase family. eIF4A subfamily. As to quaternary structure, component of the eIF4F complex, which composition varies with external and internal environmental conditions. It is composed of at least eIF4A, eIF4E and eIF4G.

The protein localises to the cytoplasm. It carries out the reaction ATP + H2O = ADP + phosphate + H(+). Functionally, ATP-dependent RNA helicase which is a subunit of the eIF4F complex involved in cap recognition and is required for mRNA binding to ribosome. In the current model of translation initiation, eIF4A unwinds RNA secondary structures in the 5'-UTR of mRNAs which is necessary to allow efficient binding of the small ribosomal subunit, and subsequent scanning for the initiator codon. The polypeptide is ATP-dependent RNA helicase eIF4A (TIF1) (Kluyveromyces lactis (strain ATCC 8585 / CBS 2359 / DSM 70799 / NBRC 1267 / NRRL Y-1140 / WM37) (Yeast)).